Reading from the N-terminus, the 525-residue chain is Serine/threonine-protein kinase YPK3 (525 aa).

Residues S90 and S105 each carry the phosphoserine modification. At T107 the chain carries Phosphothreonine. The Protein kinase domain maps to 128 to 424 (FKPVRVLGQG…KTGANNKPTK (297 aa)). ATP contacts are provided by residues 134–142 (LGQGAYGKV) and K157. Residues 170–193 (ATDSKREDEDKNDGNNNDNDDGLS) are disordered. The span at 172–182 (DSKREDEDKND) shows a compositional bias: basic and acidic residues. Catalysis depends on D277, which acts as the Proton acceptor. The residue at position 321 (S321) is a Phosphoserine; by PKH1 or PKH2. An AGC-kinase C-terminal domain is found at 445–524 (RKIDWKLLES…KASGSYLEKY (80 aa)). Position 490 is a phosphothreonine; by TORC1 (T490). S513 carries the phosphoserine; by TORC1 modification.

The protein belongs to the protein kinase superfamily. AGC Ser/Thr protein kinase family. S6 kinase subfamily. In terms of processing, phosphorylated by PKA in a TORC1-dependent manner. Phosphorylation at PKA consensus sites RRxS/T decreases upon rapamycin treatment.

It localises to the cytoplasm. It catalyses the reaction L-seryl-[protein] + ATP = O-phospho-L-seryl-[protein] + ADP + H(+). The enzyme catalyses L-threonyl-[protein] + ATP = O-phospho-L-threonyl-[protein] + ADP + H(+). In terms of biological role, AGC kinase which plays a role in TOR complex 1 (TORC1) signaling pathway which mediates temporal control of cell growth in response to nutrients. Required for phosphorylation of ribosomal protein S6 (RPS6A/RPS6B) at 'Ser-232' and 'Ser-233'. This Saccharomyces cerevisiae (strain ATCC 204508 / S288c) (Baker's yeast) protein is Serine/threonine-protein kinase YPK3.